We begin with the raw amino-acid sequence, 167 residues long: Troponin C-akin-1 protein (167 aa).

17-20 (YGAL) lines the substrate pocket. Glu92 (proton acceptor) is an active-site residue.

Belongs to the gamma-glutamylcyclotransferase family. In embryos, expression is seen in heart cells of the dorsal vessel and hindgut visceral mesoderm.

Putative gamma-glutamylcyclotransferase. In Drosophila melanogaster (Fruit fly), this protein is Troponin C-akin-1 protein (Tina-1).